A 340-amino-acid polypeptide reads, in one-letter code: Protein phosphatase PTC7 homolog fig (340 aa).

The PPM-type phosphatase domain occupies 58-314; that stretch reads RAQAETIQAP…DDITVVLASV (257 aa). Positions 90, 91, and 236 each coordinate Mn(2+).

This sequence belongs to the PP2C family. The cofactor is Mg(2+). Requires Mn(2+) as cofactor.

The enzyme catalyses O-phospho-L-seryl-[protein] + H2O = L-seryl-[protein] + phosphate. It catalyses the reaction O-phospho-L-threonyl-[protein] + H2O = L-threonyl-[protein] + phosphate. The chain is Protein phosphatase PTC7 homolog fig from Drosophila pseudoobscura pseudoobscura (Fruit fly).